The sequence spans 1096 residues: DNA-directed RNA polymerase subunit beta (1096 aa).

The segment at 1070–1096 (LMQDVNPRRSTPSRPTYESLGSDYQED) is disordered.

The protein belongs to the RNA polymerase beta chain family. In cyanobacteria the RNAP catalytic core is composed of 2 alpha, 1 beta, 1 beta', 1 gamma and 1 omega subunit. When a sigma factor is associated with the core the holoenzyme is formed, which can initiate transcription.

It catalyses the reaction RNA(n) + a ribonucleoside 5'-triphosphate = RNA(n+1) + diphosphate. Functionally, DNA-dependent RNA polymerase catalyzes the transcription of DNA into RNA using the four ribonucleoside triphosphates as substrates. The sequence is that of DNA-directed RNA polymerase subunit beta from Prochlorococcus marinus (strain MIT 9211).